Consider the following 656-residue polypeptide: Protein terminal ear1 (656 aa).

The region spanning 211 to 283 is the RRM domain; the sequence is SLVVLSPLPG…RRLVVEFTRP (73 aa). Disordered regions lie at residues 280–408 and 576–656; these read FTRP…WKGR and LTDP…GYDD. The span at 288-299 shows a compositional bias: basic residues; the sequence is PRRRGYAPHQHR. A compositionally biased stretch (low complexity) spans 314–331; it reads PSQPTSSQPPASSSSSGS. The span at 346-358 shows a compositional bias: polar residues; it reads CKSSAGSDQSSKG. Low complexity-rich tracts occupy residues 377-397, 585-601, and 612-630; these read AAAA…QKGV, RSPA…SRAA, and PAPS…STHA. The segment covering 642 to 656 has biased composition (basic and acidic residues); it reads DIRLAGELRRLGYDD.

As to expression, expressed below the shoot tip down the flanks of shoot apex in an alternating pattern. Not expressed in root tips, leaves or immature ears (female inflorescences).

Functionally, probable RNA-binding protein. Involved in the regulation of leaf initiation rate and shoot development. Seems to act more predominantly in the early stages of the leaf development, rather than in the later phase. The polypeptide is Protein terminal ear1 (TE1) (Zea mays (Maize)).